The primary structure comprises 801 residues: Mediator of RNA polymerase II transcription subunit 25 (801 aa).

Composition is skewed to low complexity over residues 647 to 676, 687 to 710, and 722 to 735; these read PQQL…QPGA, PQLR…QQPL, and PHQA…HQAP. The tract at residues 647–735 is disordered; it reads PQQLASQAPP…MGQQMQHQAP (89 aa). An LXXLL motif motif is present at residues 689–693; sequence LRNLL.

Belongs to the Mediator complex subunit 25 family. In terms of assembly, component of the Mediator complex.

It localises to the nucleus. In terms of biological role, component of the Mediator complex, a coactivator involved in the regulated transcription of nearly all RNA polymerase II-dependent genes. Mediator functions as a bridge to convey information from gene-specific regulatory proteins to the basal RNA polymerase II transcription machinery. Mediator is recruited to promoters by direct interactions with regulatory proteins and serves as a scaffold for the assembly of a functional preinitiation complex with RNA polymerase II and the general transcription factors. The chain is Mediator of RNA polymerase II transcription subunit 25 (med25) from Xenopus laevis (African clawed frog).